Consider the following 318-residue polypeptide: Electron transfer flavoprotein subunit alpha (318 aa).

257–285 (LYIALGISGAIQHRAGMQTSKTIVAVNKD) provides a ligand contact to FAD.

Belongs to the ETF alpha-subunit/FixB family. As to quaternary structure, heterodimer of an alpha and a beta subunit. FAD is required as a cofactor.

In terms of biological role, the electron transfer flavoprotein serves as a specific electron acceptor for other dehydrogenases. It transfers the electrons to the main respiratory chain via ETF-ubiquinone oxidoreductase (ETF dehydrogenase). This is Electron transfer flavoprotein subunit alpha (etfA) from Mycobacterium tuberculosis (strain CDC 1551 / Oshkosh).